We begin with the raw amino-acid sequence, 354 residues long: CREB/ATF bZIP transcription factor (354 aa).

Disordered regions lie at residues 1–95 (MRHS…PGEE), 113–156 (PRQP…AAEM), and 171–214 (GGCS…RKAA). At Ser-50 the chain carries Phosphoserine. The span at 121–132 (DPGLSSPGPLSS) shows a compositional bias: low complexity. Gly residues-rich tracts occupy residues 133 to 143 (SGGGSDSGGLW) and 190 to 199 (PGGGGGGGSG). The region spanning 204 to 267 (QAATKSPRKA…QALQEESRYL (64 aa)) is the bZIP domain. A compositionally biased stretch (low complexity) spans 205–214 (AATKSPRKAA). The basic motif stretch occupies residues 219–226 (RLNRLKKK). The interval 232 to 267 (LESRVRGLAAENQELRAENRELGKRVQALQEESRYL) is leucine-zipper. The HCFC1-binding motif (HBM) motif lies at 303–306 (DHDY).

It belongs to the bZIP family. ATF subfamily. In terms of assembly, interacts with HCFC1; the interaction inhibits CREB3 transcriptional activity. Interacts with CREB3; the interaction occurs only in combination with HCFC1. As to expression, in adults, expressed most abundantly in heart, liver and skeletal muscle, moderately abundant in kidney and pancreas, and barely detectable in lung. In fetal tissues, expressed most abundantly in kidney and very low amounts in heart, lung and liver.

It localises to the nucleus. Functionally, strongly activates transcription when bound to HCFC1. Suppresses the expression of HSV proteins in cells infected with the virus in a HCFC1-dependent manner. Also suppresses the HCFC1-dependent transcriptional activation by CREB3 and reduces the amount of CREB3 in the cell. Able to down-regulate expression of some cellular genes in CREBZF-expressing cells. In Homo sapiens (Human), this protein is CREB/ATF bZIP transcription factor (CREBZF).